Here is a 279-residue protein sequence, read N- to C-terminus: uncharacterized protein (279 aa).

The first 19 residues, 1–19 (MKLKLYLIPLLASGIILSA), serve as a signal peptide directing secretion. Residue Cys20 is the site of N-palmitoyl cysteine attachment. The S-diacylglycerol cysteine moiety is linked to residue Cys20.

Belongs to the MG439/MG440 family.

It localises to the cell membrane. This is an uncharacterized protein from Mycoplasma pneumoniae (strain ATCC 29342 / M129 / Subtype 1) (Mycoplasmoides pneumoniae).